A 259-amino-acid polypeptide reads, in one-letter code: Deoxyribose-phosphate aldolase (259 aa).

Asp-102 serves as the catalytic Proton donor/acceptor. Lys-167 (schiff-base intermediate with acetaldehyde) is an active-site residue. Lys-201 functions as the Proton donor/acceptor in the catalytic mechanism.

Belongs to the DeoC/FbaB aldolase family. DeoC type 2 subfamily.

It is found in the cytoplasm. The catalysed reaction is 2-deoxy-D-ribose 5-phosphate = D-glyceraldehyde 3-phosphate + acetaldehyde. Its pathway is carbohydrate degradation; 2-deoxy-D-ribose 1-phosphate degradation; D-glyceraldehyde 3-phosphate and acetaldehyde from 2-deoxy-alpha-D-ribose 1-phosphate: step 2/2. Catalyzes a reversible aldol reaction between acetaldehyde and D-glyceraldehyde 3-phosphate to generate 2-deoxy-D-ribose 5-phosphate. The polypeptide is Deoxyribose-phosphate aldolase (Shigella boydii serotype 4 (strain Sb227)).